Here is a 201-residue protein sequence, read N- to C-terminus: ATP-dependent Clp protease proteolytic subunit 2 (201 aa).

Ser101 (nucleophile) is an active-site residue. His126 is an active-site residue.

It belongs to the peptidase S14 family. In terms of assembly, fourteen ClpP subunits assemble into 2 heptameric rings which stack back to back to give a disk-like structure with a central cavity, resembling the structure of eukaryotic proteasomes.

Its subcellular location is the cytoplasm. The enzyme catalyses Hydrolysis of proteins to small peptides in the presence of ATP and magnesium. alpha-casein is the usual test substrate. In the absence of ATP, only oligopeptides shorter than five residues are hydrolyzed (such as succinyl-Leu-Tyr-|-NHMec, and Leu-Tyr-Leu-|-Tyr-Trp, in which cleavage of the -Tyr-|-Leu- and -Tyr-|-Trp bonds also occurs).. Cleaves peptides in various proteins in a process that requires ATP hydrolysis. Has a chymotrypsin-like activity. Plays a major role in the degradation of misfolded proteins. This chain is ATP-dependent Clp protease proteolytic subunit 2, found in Prochlorococcus marinus subsp. pastoris (strain CCMP1986 / NIES-2087 / MED4).